The sequence spans 494 residues: MKKEQVEKRTYLAVDIGASSGRIMKSQRLANGQITIEEIHRFKNGFHQKDGYQRWDMASLVHELLLGLQKVKQLGIKECFIGIDTWGVDYCLLDQSGQLLDEPIAYRDGRTEAAVTNFSKGYSLEKLYQQTGIQVQPFNTIFQLFVEEKERLAAASQLLLIPDYLGYVFTGKAVIEATNASTTQLLNAGTKQWESELLDFLGIDETLFPTLVEPGTILGDLQTAAFPDYDLPNATLITIASHDTASAILGTPGIGDDWAYISSGTWSLLGIETTVTTISAEAFQENYTNEWGAQNTIRFLKNIMGMWLIQEVARHQNYQYSYAELAALAEKEPAFQQFIDVNDPRFLNPGNMITELQAYCRETQQTVPESPGELARCIYDNLALCYSVELEKLAQLTGIERKITTLHVVGGGSNNRLLNQLTADVANVTVNAGPGEAIALGNLLMQMIATGELKDIPAARTCIQTSFPTEIYQANPIDSTIKNRYQAFMKRSSL.

Residue 18-22 (ASSGR) participates in ATP binding. Substrate is bound by residues Gly-87 and 242-244 (HDT). Asp-243 functions as the Proton acceptor in the catalytic mechanism. Thr-265 lines the ATP pocket. Asn-302 is a binding site for substrate. Residue Gln-310 participates in ATP binding. An intrachain disulfide couples Cys-360 to Cys-377. ATP is bound at residue Gly-411.

It belongs to the rhamnulokinase family. The cofactor is Mg(2+).

It catalyses the reaction L-rhamnulose + ATP = L-rhamnulose 1-phosphate + ADP + H(+). The protein operates within carbohydrate degradation; L-rhamnose degradation; glycerone phosphate from L-rhamnose: step 2/3. Its function is as follows. Involved in the catabolism of L-rhamnose (6-deoxy-L-mannose). Catalyzes the transfer of the gamma-phosphate group from ATP to the 1-hydroxyl group of L-rhamnulose to yield L-rhamnulose 1-phosphate. The chain is Rhamnulokinase from Enterococcus faecalis (strain ATCC 700802 / V583).